The following is a 273-amino-acid chain: Glutamate 5-kinase (273 aa).

K15 serves as a coordination point for ATP. Positions 55, 142, and 158 each coordinate substrate. Residues 178–179 (SD) and 220–226 (TGGMLSK) each bind ATP.

The protein belongs to the glutamate 5-kinase family.

The protein localises to the cytoplasm. The catalysed reaction is L-glutamate + ATP = L-glutamyl 5-phosphate + ADP. It functions in the pathway amino-acid biosynthesis; L-proline biosynthesis; L-glutamate 5-semialdehyde from L-glutamate: step 1/2. In terms of biological role, catalyzes the transfer of a phosphate group to glutamate to form L-glutamate 5-phosphate. The polypeptide is Glutamate 5-kinase (Streptococcus pyogenes serotype M6 (strain ATCC BAA-946 / MGAS10394)).